The sequence spans 88 residues: Small ribosomal subunit protein bS18B (88 aa).

This sequence belongs to the bacterial ribosomal protein bS18 family. In terms of assembly, part of the 30S ribosomal subunit. Forms a tight heterodimer with protein bS6.

Its function is as follows. Binds as a heterodimer with protein bS6 to the central domain of the 16S rRNA, where it helps stabilize the platform of the 30S subunit. In Roseiflexus castenholzii (strain DSM 13941 / HLO8), this protein is Small ribosomal subunit protein bS18B.